The primary structure comprises 349 residues: Twinfilin-2-A (349 aa).

ADF-H domains lie at 4–139 (QTGI…KHVS) and 177–313 (GLSF…DEVH). Residues 321-349 (QAFAKPKGPAGKRGQKRLIKGPGENGEDS) form a disordered region.

This sequence belongs to the actin-binding proteins ADF family. Twinfilin subfamily. As to quaternary structure, interacts with G-actin; ADP-actin form and capping protein (CP).

The protein localises to the cytoplasm. It is found in the cytoskeleton. Its subcellular location is the perinuclear region. Functionally, actin-binding protein involved in motile and morphological processes. Inhibits actin polymerization, likely by sequestering G-actin. This is Twinfilin-2-A (twf2-a) from Xenopus laevis (African clawed frog).